Here is a 389-residue protein sequence, read N- to C-terminus: Dual-specificity RNA methyltransferase RlmN (389 aa).

Glutamate 94 (proton acceptor) is an active-site residue. In terms of domain architecture, Radical SAM core spans 134-367 (PRVRVTQCIS…CFVRRRRGDD (234 aa)). Cysteine 141 and cysteine 372 are oxidised to a cystine. 3 residues coordinate [4Fe-4S] cluster: cysteine 148, cysteine 152, and cysteine 155. Residues 197-198 (GE), serine 229, 253-255 (SLH), and asparagine 329 contribute to the S-adenosyl-L-methionine site. Cysteine 372 (S-methylcysteine intermediate) is an active-site residue.

This sequence belongs to the radical SAM superfamily. RlmN family. It depends on [4Fe-4S] cluster as a cofactor.

Its subcellular location is the cytoplasm. The enzyme catalyses adenosine(2503) in 23S rRNA + 2 reduced [2Fe-2S]-[ferredoxin] + 2 S-adenosyl-L-methionine = 2-methyladenosine(2503) in 23S rRNA + 5'-deoxyadenosine + L-methionine + 2 oxidized [2Fe-2S]-[ferredoxin] + S-adenosyl-L-homocysteine. It carries out the reaction adenosine(37) in tRNA + 2 reduced [2Fe-2S]-[ferredoxin] + 2 S-adenosyl-L-methionine = 2-methyladenosine(37) in tRNA + 5'-deoxyadenosine + L-methionine + 2 oxidized [2Fe-2S]-[ferredoxin] + S-adenosyl-L-homocysteine. Functionally, specifically methylates position 2 of adenine 2503 in 23S rRNA and position 2 of adenine 37 in tRNAs. m2A2503 modification seems to play a crucial role in the proofreading step occurring at the peptidyl transferase center and thus would serve to optimize ribosomal fidelity. This Sorangium cellulosum (strain So ce56) (Polyangium cellulosum (strain So ce56)) protein is Dual-specificity RNA methyltransferase RlmN.